We begin with the raw amino-acid sequence, 257 residues long: Asnovolin H dehydrogenase nvfC (257 aa).

Residues 7–26 (YVLIITGSASGIGLATATIA) form a helical membrane-spanning segment. I11 serves as a coordination point for NADP(+). Residues N57, N92, and N110 are each glycosylated (N-linked (GlcNAc...) asparagine). The NADP(+) site is built by R119, Y151, K155, and V184. The active-site Proton donor is the Y151. K155 acts as the Lowers pKa of active site Tyr in catalysis.

This sequence belongs to the short-chain dehydrogenases/reductases (SDR) family.

The protein localises to the membrane. The catalysed reaction is asnovolin H + A = chermesin D + AH2. Its pathway is secondary metabolite biosynthesis; terpenoid biosynthesis. Its function is as follows. Short chain dehydrogenase; part of the gene cluster that mediates the biosynthesis of novofumigatonin, a heavily oxygenated meroterpenoid containing a unique orthoester moiety. The first step of the pathway is the synthesis of 3,5-dimethylorsellinic acid (DMOA) by the polyketide synthase nvfA via condensation of one acetyl-CoA starter unit with 3 malonyl-CoA units and 2 methylations. DMOA is then converted to farnesyl-DMOA by the farnesyltransferase nvfB. Epoxydation by FAD-dependent monooxygenase nvfK, followed by a protonation-initiated cyclization catalyzed by the terpene cyclase nvfL leads to the production of asnavolin H. The short chain dehydrogenase nvfC then as a 3-OH dehydrogenase of asnovolin H to yield chemesin D. There are two branches to synthesize asnovolin A from chemesin D. In one branch, chemesin D undergoes Baeyer-Villiger oxidation by nvfH, methylation by nvfJ, and enoyl reduction by the nvfM D enoylreductase that reduces the double bond between C-5'and C-6', to form respectively asnovolin I, asnovolin K, and asnovolin A. In the other branch, the methylation precedes the Baeyer-Villiger oxidation and the enoyl reduction to yield asnovolin A via the asnovolin J intermediate. Asnovolin A is further converted to fumigatonoid A by the Fe(II)/2-oxoglutarate-dependent dioxygenase nvfI that catalyzes an endoperoxidation reaction. The alpha/beta hydrolase nvfD then acts as an epimerase that converts fumigatonoid A to its C-5' epimer, which then undergoes spontaneous or nvfD-catalyzed lactonization. The following step utilizes the ketoreductase nvfG to produce fumigatonoid B. The dioxygenase nvfE further converts fumigatonoid B into fumigatonoid C. Finally the Fe(II)/2-oxoglutarate-dependent dioxygenase nvfF catalyzes two rounds of oxidation to transform fumigatonoid C into the end product, novofumigatonin A. This Aspergillus novofumigatus (strain IBT 16806) protein is Asnovolin H dehydrogenase nvfC.